Reading from the N-terminus, the 394-residue chain is ATP phosphoribosyltransferase regulatory subunit (394 aa).

This sequence belongs to the class-II aminoacyl-tRNA synthetase family. HisZ subfamily. Heteromultimer composed of HisG and HisZ subunits.

Its subcellular location is the cytoplasm. It functions in the pathway amino-acid biosynthesis; L-histidine biosynthesis; L-histidine from 5-phospho-alpha-D-ribose 1-diphosphate: step 1/9. Required for the first step of histidine biosynthesis. May allow the feedback regulation of ATP phosphoribosyltransferase activity by histidine. This chain is ATP phosphoribosyltransferase regulatory subunit, found in Pseudomonas paraeruginosa (strain DSM 24068 / PA7) (Pseudomonas aeruginosa (strain PA7)).